The following is a 264-amino-acid chain: THAP domain-containing protein 10 (264 aa).

The THAP-type zinc-finger motif lies at 1-90; the sequence is MPARCVAAHC…LVAGAVPTLH (90 aa). Disordered regions lie at residues 90–136 and 160–195; these read HRVP…PRAG and TQPH…KRPR. Residues 99-122 are compositionally biased toward basic and acidic residues; sequence GGEEGDQAGRPDTRGELQAARHSE. Positions 160–175 are enriched in polar residues; it reads TQPHADNPSNTVTSVP.

In Pongo abelii (Sumatran orangutan), this protein is THAP domain-containing protein 10 (THAP10).